Reading from the N-terminus, the 428-residue chain is Sialidase-3 (428 aa).

An FRIP motif motif is present at residues 24–27 (YRIP). Residues arginine 25 and arginine 45 each coordinate substrate. The active-site Proton acceptor is aspartate 50. The BNR 1 repeat unit spans residues 129-140 (IYSQDAGCSWSE). Residues tyrosine 179 and tyrosine 181 each contribute to the substrate site. Residues 203 to 214 (IYSDDLGVTWHH) form a BNR 2 repeat. 2 residues coordinate substrate: glutamate 225 and arginine 245. Residues 254–265 (ALSTDHGEGFQR) form a BNR 3 repeat. A disordered region spans residues 294–318 (RCQDSSSKDAPTIQQSSPGSSLRLE). The segment covering 301–313 (KDAPTIQQSSPGS) has biased composition (polar residues). Phosphoserine is present on serine 313. Residue arginine 340 participates in substrate binding. Tyrosine 370 functions as the Nucleophile in the catalytic mechanism. Residue glutamate 387 is part of the active site.

Belongs to the glycosyl hydrolase 33 family. As to quaternary structure, interacts with CAV1; this interaction enhances NEU3 sialidase activity within caveola. Interacts with EGFR; this interaction mediates desialylation of EGFR and enhances downstream signaling. Post-translationally, palmitoylated; may regulate intracellular trafficking and anchorage to plasma membrane and endomembranes. As to expression, highly expressed in skeletal muscle, testis, adrenal gland and thymus, followed by pancreas, liver, heart and thymus. Weakly expressed in kidney, placenta, brain and lung.

The protein localises to the cell membrane. Its subcellular location is the membrane. It localises to the caveola. The protein resides in the early endosome membrane. It is found in the recycling endosome membrane. The protein localises to the lysosome membrane. The enzyme catalyses Hydrolysis of alpha-(2-&gt;3)-, alpha-(2-&gt;6)-, alpha-(2-&gt;8)- glycosidic linkages of terminal sialic acid residues in oligosaccharides, glycoproteins, glycolipids, colominic acid and synthetic substrates.. The catalysed reaction is a ganglioside GD1a + H2O = a ganglioside GM1 + N-acetylneuraminate. It catalyses the reaction a ganglioside GD1a (d18:1(4E)) + H2O = a ganglioside GM1 (d18:1(4E)) + N-acetylneuraminate. It carries out the reaction a ganglioside GD1b + H2O = a ganglioside GM1 + N-acetylneuraminate. The enzyme catalyses a ganglioside GD1b (d18:1(4E)) + H2O = a ganglioside GM1 (d18:1(4E)) + N-acetylneuraminate. The catalysed reaction is a ganglioside GD3 + H2O = a ganglioside GM3 + N-acetylneuraminate. It catalyses the reaction a ganglioside GD3 (d18:1(4E)) + H2O = a ganglioside GM3 (d18:1(4E)) + N-acetylneuraminate. It carries out the reaction a ganglioside GM3 + H2O = a beta-D-galactosyl-(1-&gt;4)-beta-D-glucosyl-(1&lt;-&gt;1)-ceramide + N-acetylneuraminate. The enzyme catalyses a ganglioside GM1 + H2O = a ganglioside GA1 + N-acetylneuraminate. The catalysed reaction is a ganglioside GM1 (d18:1(4E)) + H2O = a ganglioside GA1 (d18:1(4E)) + N-acetylneuraminate. It catalyses the reaction a ganglioside GM2 (d18:1(4E)) + H2O = a ganglioside GA2 (d18:1(4E)) + N-acetylneuraminate. It carries out the reaction a ganglioside GM3 (d18:1(4E)) + H2O = a beta-D-Gal-(1-&gt;4)-beta-D-Glc-(1&lt;-&gt;1)-Cer(d18:1(4E)) + N-acetylneuraminate. The enzyme catalyses a ganglioside GT1b + H2O = a ganglioside GD1b + N-acetylneuraminate. Exo-alpha-sialidase that catalyzes the hydrolytic cleavage of the terminal sialic acid (N-acetylneuraminic acid, Neu5Ac) of a glycan moiety in the catabolism of glycolipids, glycoproteins and oligosacharides. Displays high catalytic efficiency for gangliosides including alpha-(2-&gt;3)-sialylated GD1a and GM3 and alpha-(2-&gt;8)-sialylated GD3. Plays a role in the regulation of transmembrane signaling through the modulation of ganglioside content of the lipid bilayer and by direct interaction with signaling receptors, such as EGFR. Desialylates EGFR and activates downstream signaling in proliferating cells. Contributes to clathrin-mediated endocytosis by regulating sorting of endocytosed receptors to early and recycling endosomes. This Homo sapiens (Human) protein is Sialidase-3 (NEU3).